The chain runs to 307 residues: UDP-N-acetylenolpyruvoylglucosamine reductase (307 aa).

Residues 34–199 form the FAD-binding PCMH-type domain; the sequence is RVGGPAQVLF…TAVRFRGTPS (166 aa). Arg-179 is an active-site residue. Ser-228 (proton donor) is an active-site residue. The active site involves Glu-298.

It belongs to the MurB family. FAD serves as cofactor.

It localises to the cytoplasm. It catalyses the reaction UDP-N-acetyl-alpha-D-muramate + NADP(+) = UDP-N-acetyl-3-O-(1-carboxyvinyl)-alpha-D-glucosamine + NADPH + H(+). The protein operates within cell wall biogenesis; peptidoglycan biosynthesis. In terms of biological role, cell wall formation. The chain is UDP-N-acetylenolpyruvoylglucosamine reductase from Bradyrhizobium sp. (strain ORS 278).